Reading from the N-terminus, the 541-residue chain is Chaperonin GroEL (541 aa).

ATP-binding positions include 29-32, 86-90, glycine 413, 476-478, and aspartate 492; these read TLGP, DGTTT, and NAA.

It belongs to the chaperonin (HSP60) family. Forms a cylinder of 14 subunits composed of two heptameric rings stacked back-to-back. Interacts with the co-chaperonin GroES.

The protein localises to the cytoplasm. The catalysed reaction is ATP + H2O + a folded polypeptide = ADP + phosphate + an unfolded polypeptide.. In terms of biological role, together with its co-chaperonin GroES, plays an essential role in assisting protein folding. The GroEL-GroES system forms a nano-cage that allows encapsulation of the non-native substrate proteins and provides a physical environment optimized to promote and accelerate protein folding. The polypeptide is Chaperonin GroEL (Enterococcus faecalis (strain ATCC 700802 / V583)).